Here is a 97-residue protein sequence, read N- to C-terminus: Citrate lyase acyl carrier protein (97 aa).

S14 carries the post-translational modification O-(phosphoribosyl dephospho-coenzyme A)serine.

Belongs to the CitD family. As to quaternary structure, oligomer with a subunit composition of (alpha,beta,gamma)6.

It is found in the cytoplasm. In terms of biological role, covalent carrier of the coenzyme of citrate lyase. The sequence is that of Citrate lyase acyl carrier protein from Enterobacter sp. (strain 638).